The sequence spans 384 residues: Ubiquitin-like modifier-activating enzyme 5 (384 aa).

ATP-binding residues include Gly63, Asp84, Lys107, Asn130, and Asn164. Residues Cys206 and Cys209 each contribute to the Zn(2+) site. Cys230 acts as the Glycyl thioester intermediate in catalysis. Zn(2+)-binding residues include Cys283 and Cys288. Residues 352-375 (EAPEKSSAEATQAATAPVDDTSLE) are disordered.

This sequence belongs to the ubiquitin-activating E1 family. UBA5 subfamily.

E1-like enzyme which activates UFM1. The sequence is that of Ubiquitin-like modifier-activating enzyme 5 from Drosophila persimilis (Fruit fly).